A 619-amino-acid chain; its full sequence is Probable ATP-dependent RNA helicase DDX59 (619 aa).

The tract at residues 1–101 (MFVPRSLKIK…KSFSKTQRWP (101 aa)) is disordered. Positions 12–27 (SSNDDLKSGEAKKSKP) are enriched in basic and acidic residues. Residue Lys26 forms a Glycyl lysine isopeptide (Lys-Gly) (interchain with G-Cter in SUMO2) linkage. A compositionally biased stretch (polar residues) spans 59 to 76 (ASSTNSPSCQLAEVSSTG). At Ser64 the chain carries Phosphoserine. Over residues 79–91 (EGVKDSHPSEEPV) the composition is skewed to basic and acidic residues. The segment at 104–133 (GEPVCVVCGRYGEYICDKTDEDVCSLECKA) adopts an HIT-type zinc-finger fold. Position 160 is a phosphoserine (Ser160). Positions 203 to 231 (IDFEHCGFPETLNQNLKKSGYEVPTPIQM) match the Q motif motif. The Helicase ATP-binding domain occupies 234 to 405 (IPVGLLGRDI…DQLLHNPVRI (172 aa)). 247–254 (ADTGSGKT) provides a ligand contact to ATP. Residues 353-356 (DEAD) carry the DEAD box motif. Residues 416 to 579 (SVRQIILWVE…ILPPQLLNSP (164 aa)) form the Helicase C-terminal domain. Positions 583–594 (EQKRKEQQKDRQ) are enriched in basic and acidic residues. Residues 583-603 (EQKRKEQQKDRQTQNSLVTGA) form a disordered region.

The protein belongs to the DEAD box helicase family. DDX59 subfamily. In terms of assembly, interacts (via HIT-type zinc finger) with the RUVBL1/RUVBL2 complex in the presence of ADP.

It localises to the cytoplasm. Its subcellular location is the nucleus. It catalyses the reaction ATP + H2O = ADP + phosphate + H(+). This chain is Probable ATP-dependent RNA helicase DDX59 (Ddx59), found in Mus musculus (Mouse).